A 237-amino-acid polypeptide reads, in one-letter code: 2-C-methyl-D-erythritol 4-phosphate cytidylyltransferase (237 aa).

Belongs to the IspD/TarI cytidylyltransferase family. IspD subfamily.

The enzyme catalyses 2-C-methyl-D-erythritol 4-phosphate + CTP + H(+) = 4-CDP-2-C-methyl-D-erythritol + diphosphate. The protein operates within isoprenoid biosynthesis; isopentenyl diphosphate biosynthesis via DXP pathway; isopentenyl diphosphate from 1-deoxy-D-xylulose 5-phosphate: step 2/6. Catalyzes the formation of 4-diphosphocytidyl-2-C-methyl-D-erythritol from CTP and 2-C-methyl-D-erythritol 4-phosphate (MEP). This Clostridioides difficile (strain 630) (Peptoclostridium difficile) protein is 2-C-methyl-D-erythritol 4-phosphate cytidylyltransferase.